A 649-amino-acid chain; its full sequence is FAS-associated factor 1 (649 aa).

The UBA domain occupies Met-1–Gly-57. Disordered stretches follow at residues Phe-56–Arg-84 and Arg-266–Ser-290. Over residues Pro-68–Ala-82 the composition is skewed to low complexity. Residue Ser-319 is modified to Phosphoserine. One can recognise a UBX domain in the interval Asn-568–Leu-645. Thr-579 is modified (phosphothreonine). Residue Ser-581 is modified to Phosphoserine.

Interacts with CDT1 and ATPase VCP/p97. Interacts (via UBA domain) with FAS (via death domain). Interacts (via UBA domain) with NLRP12 (via DAPIN/PYRIN domain).

The protein localises to the nucleus. Its function is as follows. Ubiquitin-binding protein. Required for the progression of DNA replication forks by targeting DNA replication licensing factor CDT1 for degradation. Potentiates but cannot initiate FAS-induced apoptosis. This Mus musculus (Mouse) protein is FAS-associated factor 1 (Faf1).